The following is a 396-amino-acid chain: S-adenosylmethionine synthase 3 (396 aa).

Residue Glu-13 coordinates Mg(2+). Residue His-19 coordinates ATP. Glu-47 is a K(+) binding site. Positions 60 and 103 each coordinate L-methionine. Residues 171 to 173 (DGK), 239 to 242 (SGRF), Asp-250, 256 to 257 (RK), Ala-273, Lys-277, and Lys-281 contribute to the ATP site. Residue Asp-250 coordinates L-methionine. L-methionine is bound at residue Lys-281.

Belongs to the AdoMet synthase family. As to quaternary structure, homotetramer. The cofactor is Mn(2+). Mg(2+) serves as cofactor. It depends on Co(2+) as a cofactor. Requires K(+) as cofactor. In terms of tissue distribution, expressed in roots, stems and leaves (at protein level).

The protein localises to the cytoplasm. The catalysed reaction is L-methionine + ATP + H2O = S-adenosyl-L-methionine + phosphate + diphosphate. The protein operates within amino-acid biosynthesis; S-adenosyl-L-methionine biosynthesis; S-adenosyl-L-methionine from L-methionine: step 1/1. Functionally, catalyzes the formation of S-adenosylmethionine from methionine and ATP. The reaction comprises two steps that are both catalyzed by the same enzyme: formation of S-adenosylmethionine (AdoMet) and triphosphate, and subsequent hydrolysis of the triphosphate. May be involved in the synthesis of betain in response to abiotic stress such as high salinity. This chain is S-adenosylmethionine synthase 3 (SAMS3), found in Atriplex nummularia (Old man saltbush).